The sequence spans 1736 residues: Centrosomal protein of 152 kDa (1736 aa).

Positions 1–60 (MSLEFGSVALQTQNEDEEFDKEDFEREKELQQLLTDLPHDMLDDELSSPERHDSDCSMDG) are interaction with PLK4. Residues 1–127 (MSLEFGSVAL…SGYSPPGKRE (127 aa)) are disordered. Basic and acidic residues-rich tracts occupy residues 61-82 (RAAE…DILP) and 94-105 (EENRSKTEDQHL). Coiled coils occupy residues 228-481 (IIQL…AELG), 552-651 (HLVS…QEFD), 692-776 (LEVY…TERQ), 835-868 (AAVS…ALRK), 950-1075 (NVMS…YEED), and 1205-1315 (GHCF…KIKR). The interval 571 to 592 (FQQSKDGDSGMETKTDTSEKTT) is disordered. Over residues 575–592 (KDGDSGMETKTDTSEKTT) the composition is skewed to basic and acidic residues. T1277 is subject to Phosphothreonine. Disordered stretches follow at residues 1416-1479 (GTER…ASTA), 1543-1562 (EKNS…LRSP), 1574-1614 (GSPT…SDST), and 1677-1736 (QQGK…SPLE). Over residues 1462 to 1473 (RRLEESKHREMR) the composition is skewed to basic and acidic residues. Polar residues-rich tracts occupy residues 1576–1595 (PTET…SQDS) and 1603–1614 (PSSSPAWPSDST). K1714 is modified (N6-acetyllysine).

The protein belongs to the CEP152 family. In terms of assembly, interacts (via N-terminus) with PLK4; the interaction is mutally exclusive with a PLK4:CEP192 interaction. Interacts (via C-terminus) with CPAP (via-N-terminus). Interacts with CINP. Interacts with CDK5RAP2, WDR62, CEP63 and CEP131. CEP63, CDK5RAP2, CEP152, WDR62 are proposed to form a stepwise assembled complex at the centrosome forming a ring near parental centrioles. Interacts with DEUP1; this interaction recruits CEP152 to the deuterosome. The interactions with CEP63 and DEUP1 are mutually exclusive. Interacts with CCDC66.

It is found in the cytoplasm. It localises to the cytoskeleton. The protein localises to the microtubule organizing center. Its subcellular location is the centrosome. The protein resides in the centriole. Its function is as follows. Necessary for centrosome duplication; the function also seems to involve CEP63, CDK5RAP2 and WDR62 through a stepwise assembled complex at the centrosome that recruits CDK2 required for centriole duplication. Acts as a molecular scaffold facilitating the interaction of PLK4 and CPAP, 2 molecules involved in centriole formation. Proposed to snatch PLK4 away from PLK4:CEP92 complexes in early G1 daughter centriole and to reposition PLK4 at the outer boundary of a newly forming CEP152 ring structure. Also plays a key role in deuterosome-mediated centriole amplification in multiciliated that can generate more than 100 centrioles. Overexpression of cep152 can drive amplification of centrioles. This is Centrosomal protein of 152 kDa (Cep152) from Mus musculus (Mouse).